Consider the following 215-residue polypeptide: FGFR1 oncogene partner 2 homolog (215 aa).

Residues 12-186 (AKELVERLRE…REILQITKIS (175 aa)) are a coiled coil. The disordered stretch occupies residues 193 to 215 (EDASENSPHSAPVPNTDLILRKS).

This sequence belongs to the SIKE family.

The protein localises to the cytoplasm. This is FGFR1 oncogene partner 2 homolog (fgfr1op2) from Xenopus laevis (African clawed frog).